Here is a 459-residue protein sequence, read N- to C-terminus: Proton-coupled folate transporter (459 aa).

At Met-1 the chain carries N-acetylmethionine. Over 1 to 25 (MEGRANSPGEPRAWPTRSVLCRGCV) the chain is Cytoplasmic. A helical transmembrane segment spans residues 26 to 44 (EPLVFLANFALVLQGPVTT). Over 45–82 (QYLWHRFSADLGYNGTRHRDSCSNHSVDPIAQEVETLT) the chain is Extracellular. N-linked (GlcNAc...) asparagine glycans are attached at residues Asn-58 and Asn-68. Cys-66 and Cys-298 are joined by a disulfide. The helical transmembrane segment at 83 to 108 (SHWTLYMNVGGFLVGLFSSTLLGAWS) threads the bilayer. The Cytoplasmic portion of the chain corresponds to 109–112 (DCVG). A helical transmembrane segment spans residues 113–135 (RRPLLVLASLGLLLQTVLSIFVV). The Extracellular segment spans residues 136-140 (QLHLH). Residues 141–154 (IGYLVLGRILCALL) traverse the membrane as a helical segment. The Cytoplasmic portion of the chain corresponds to 155–177 (GDFSGLLAASFASVADVSSSRTR). Positions 156 and 185 each coordinate H(+). The helical transmembrane segment at 178–203 (TIRMALLEACIGVAGMLASFIGGFLL) threads the bilayer. At 204–208 (QEQVY) the chain is on the extracellular side. A helical membrane pass occupies residues 209–227 (VNPFWLALAVLTVMTLYAA). The Cytoplasmic portion of the chain corresponds to 228–266 (FCFGETVKERTPTRLFTLRHHRSVIQLYVTQAPEKSRKH). Residues 267 to 289 (LALYSLAIFVMITVHLGAQDILT) traverse the membrane as a helical segment. His-281 lines the H(+) pocket. At 290 to 302 (LYELSAPLCWDSR) the chain is on the extracellular side. A helical membrane pass occupies residues 303-325 (LISYGSAAQQLPYLTSLLGLRLL). At 326–331 (QYCLAD) the chain is on the cytoplasmic side. Residues 332–351 (TWVAEIGLVFNILGMMVFAF) traverse the membrane as a helical segment. The Extracellular segment spans residues 352–355 (ATIT). Residues 356–376 (PLMFTGYGLLFLSLVVTPIIR) form a helical membrane-spanning segment. Topologically, residues 377-388 (AKLSRLVRQSEQ) are cytoplasmic. A helical membrane pass occupies residues 389–414 (GALFSALACVNGLAMLMASGIFNSLY). The Extracellular portion of the chain corresponds to 415 to 422 (PATLNLMK). A helical membrane pass occupies residues 423-441 (GFPFLLAAGLLFIPAILMG). At 442 to 459 (ILERDNHCPEFQEFSQSP) the chain is on the cytoplasmic side. Position 458 is a phosphoserine (Ser-458).

Belongs to the major facilitator superfamily. SLC46A family. As to quaternary structure, monomer. In terms of tissue distribution, expressed in retina and retinal pigment epithelium.

The protein resides in the cell membrane. It is found in the apical cell membrane. It localises to the basolateral cell membrane. The protein localises to the endosome membrane. Its subcellular location is the cytoplasm. It catalyses the reaction folate(in) + H(+)(in) = folate(out) + H(+)(out). It carries out the reaction (6S)-5-methyl-5,6,7,8-tetrahydrofolate(in) + H(+)(in) = (6S)-5-methyl-5,6,7,8-tetrahydrofolate(out) + H(+)(out). The catalysed reaction is methotrexate(in) + H(+)(in) = methotrexate(out) + H(+)(out). The enzyme catalyses pemetrexed(in) + H(+)(in) = pemetrexed(out) + H(+)(out). Functionally, proton-coupled folate symporter that mediates folate absorption using an H(+) gradient as a driving force. Involved in the intestinal absorption of folates at the brush-border membrane of the proximal jejunum, and the transport from blood to cerebrospinal fluid across the choroid plexus. Functions at acidic pH via alternate outward- and inward-open conformation states. Protonation of residues in the outward open state primes the protein for transport. Binding of folate promotes breaking of salt bridge network and subsequent closure of the extracellular gate, leading to the inward-open state and release of protons and folate. Also able to transport antifolate drugs, such as methotrexate and pemetrexed. Involved in FOLR1-mediated endocytosis by serving as a route of export of folates from acidified endosomes. Also acts as a lower-affinity, pH-independent heme carrier protein and constitutes the main importer of heme in the intestine. Imports heme in the retina and retinal pigment epithelium, in neurons of the hippocampus, in hepatocytes and in the renal epithelial cells. Hence, participates in the trafficking of heme and increases intracellular iron content. This Bos taurus (Bovine) protein is Proton-coupled folate transporter.